We begin with the raw amino-acid sequence, 892 residues long: Alanine--tRNA ligase (892 aa).

Zn(2+)-binding residues include histidine 574, histidine 578, cysteine 676, and histidine 680.

This sequence belongs to the class-II aminoacyl-tRNA synthetase family. The cofactor is Zn(2+).

It is found in the cytoplasm. The catalysed reaction is tRNA(Ala) + L-alanine + ATP = L-alanyl-tRNA(Ala) + AMP + diphosphate. Catalyzes the attachment of alanine to tRNA(Ala) in a two-step reaction: alanine is first activated by ATP to form Ala-AMP and then transferred to the acceptor end of tRNA(Ala). Also edits incorrectly charged Ser-tRNA(Ala) and Gly-tRNA(Ala) via its editing domain. The sequence is that of Alanine--tRNA ligase from Prochlorococcus marinus (strain MIT 9313).